A 390-amino-acid polypeptide reads, in one-letter code: GPI inositol-deacylase (390 aa).

A helical transmembrane segment spans residues 21–41 (FIVYFIICLTIIISALGVYLY). The active site involves serine 202. Residues 354–374 (VHLLSLTIFALKWTIIVLAII) form a helical membrane-spanning segment.

Belongs to the GPI inositol-deacylase family.

Its subcellular location is the endoplasmic reticulum membrane. In terms of biological role, involved in inositol deacylation of GPI-anchored proteins which plays important roles in the quality control and ER-associated degradation of GPI-anchored proteins. The chain is GPI inositol-deacylase (BST1) from Candida albicans (strain SC5314 / ATCC MYA-2876) (Yeast).